The chain runs to 190 residues: Hypoxanthine/guanine phosphoribosyltransferase (190 aa).

This sequence belongs to the purine/pyrimidine phosphoribosyltransferase family. Archaeal HPRT subfamily. Homodimer.

The protein localises to the cytoplasm. It carries out the reaction IMP + diphosphate = hypoxanthine + 5-phospho-alpha-D-ribose 1-diphosphate. The enzyme catalyses GMP + diphosphate = guanine + 5-phospho-alpha-D-ribose 1-diphosphate. It participates in purine metabolism; IMP biosynthesis via salvage pathway; IMP from hypoxanthine: step 1/1. Functionally, catalyzes a salvage reaction resulting in the formation of IMP that is energically less costly than de novo synthesis. In Methanosarcina barkeri (strain Fusaro / DSM 804), this protein is Hypoxanthine/guanine phosphoribosyltransferase.